A 490-amino-acid chain; its full sequence is Ribulose bisphosphate carboxylase large chain (490 aa).

Residues Asn-127 and Thr-177 each contribute to the substrate site. Lys-179 acts as the Proton acceptor in catalysis. Lys-181 is a binding site for substrate. The Mg(2+) site is built by Lys-205, Asp-207, and Glu-208. Residue Lys-205 is modified to N6-carboxylysine. The active-site Proton acceptor is the His-297. Substrate is bound by residues Arg-298, His-330, and Ser-382.

The protein belongs to the RuBisCO large chain family. Type I subfamily. Heterohexadecamer of 8 large chains and 8 small chains. It depends on Mg(2+) as a cofactor.

It localises to the plastid. The protein localises to the chloroplast. The enzyme catalyses 2 (2R)-3-phosphoglycerate + 2 H(+) = D-ribulose 1,5-bisphosphate + CO2 + H2O. The catalysed reaction is D-ribulose 1,5-bisphosphate + O2 = 2-phosphoglycolate + (2R)-3-phosphoglycerate + 2 H(+). Functionally, ruBisCO catalyzes two reactions: the carboxylation of D-ribulose 1,5-bisphosphate, the primary event in carbon dioxide fixation, as well as the oxidative fragmentation of the pentose substrate in the photorespiration process. Both reactions occur simultaneously and in competition at the same active site. This chain is Ribulose bisphosphate carboxylase large chain, found in Detonula confervacea (Marine diatom).